A 150-amino-acid chain; its full sequence is Large ribosomal subunit protein uL15 (150 aa).

The segment at 1–55 (MADNEILQMHDLKPAPGAKKDRTRVGRGEGSKGKTAGRGAKGQTKRNHVRPGFEG) is disordered. Residues 8–32 (QMHDLKPAPGAKKDRTRVGRGEGSK) show a composition bias toward basic and acidic residues.

It belongs to the universal ribosomal protein uL15 family. Part of the 50S ribosomal subunit.

Functionally, binds to the 23S rRNA. The sequence is that of Large ribosomal subunit protein uL15 from Bifidobacterium longum (strain DJO10A).